The primary structure comprises 468 residues: Aspartate ammonia-lyase (468 aa).

Positions 101, 140, 141, 142, 187, and 188 each coordinate L-aspartate. The tract at residues 317–326 (GSSIMPGKVN) is SS loop. The active-site Proton acceptor is the Ser318. Positions 319 and 324 each coordinate L-aspartate.

It belongs to the class-II fumarase/aspartase family. Aspartase subfamily. Homotetramer.

The enzyme catalyses L-aspartate = fumarate + NH4(+). Unlike E.coli aspartase, the enzyme is not activated by the presence of divalent metal ions at alkaline pH. In terms of biological role, catalyzes the reversible conversion of L-aspartate to fumarate and ammonia. Is highly specific for L-aspartate in the deamination reaction, and cannot use alternative substrates such as D-aspartic acid, alpha-methyl-DL-aspartic acid, beta-methyl-DL-aspartic acid or L-glutamate. In the reverse reaction, alternative nucleophiles (such as hydroxylamine, hydrazine, methoxylamine and methylamine) can replace ammonia in vitro, leading to the formation of N-substituted aspartic acid derivatives. This Bacillus sp protein is Aspartate ammonia-lyase.